The primary structure comprises 680 residues: Methionine--tRNA ligase (680 aa).

The short motif at 15–25 is the 'HIGH' region element; sequence PYANGPVHIGH. Cys147, Cys150, Cys160, and Cys163 together coordinate Zn(2+). The 'KMSKS' region signature appears at 332–336; it reads KISTS. An ATP-binding site is contributed by Thr335. The 103-residue stretch at 578–680 folds into the tRNA-binding domain; sequence EFEKLDIRVG…REVKPGSEVK (103 aa).

It belongs to the class-I aminoacyl-tRNA synthetase family. MetG type 1 subfamily. In terms of assembly, homodimer. Zn(2+) serves as cofactor.

The protein resides in the cytoplasm. The catalysed reaction is tRNA(Met) + L-methionine + ATP = L-methionyl-tRNA(Met) + AMP + diphosphate. Functionally, is required not only for elongation of protein synthesis but also for the initiation of all mRNA translation through initiator tRNA(fMet) aminoacylation. In Phocaeicola vulgatus (strain ATCC 8482 / DSM 1447 / JCM 5826 / CCUG 4940 / NBRC 14291 / NCTC 11154) (Bacteroides vulgatus), this protein is Methionine--tRNA ligase.